The chain runs to 638 residues: MEIIRSNFKSNLHKVYQAIEEADFFAIDGEFSGISDGPSVTALTNGFDTPEERYQKLKKHSMDFLLFQFGLCTFKYDYTDSKYITKSFNFYVFPKPFNRSSPDVKFVCQSSSIDFLASQGFDFNKVFRNGIPYLNQEEERQLREQYDEKRSQSNGAGALSYTSPNTSKCPVTIPDDQKKFIDQVVEKIEDLLQSEENKNLDLEPCTGFQRKLIYQTLSWKYPKGIHVETLETEKKERYIVISKVDEEERKRREQQKHAKEQEELNDAVGFSRVIHAIANSGKLVIGHNMLLDVMHTVHQFYCPLPADLNEFKEMTTCVFPRLLDTKLMASTQPFKDIINNTSLAELEKRLKETPFNPPKVESAEGFPSYDTASEQLHEAGYDAYITGLCFISMANYLGSFLSPPKSHVSARSKLIEPFFNKLFLMRVMDIPYLNLEGPDLQPKRDHVLHVTFPKEWKTSDLYQLFSAFGNIQISWIDDTSAFVSLSQPEQVPIAVNTSKYAESYRIQTYADYVGKKREEKQMKRKWTEDSWKEVEPKRLNTQCGSYSLQNHHYHANSLTATSTVGKRNLSPSRAEAGLEARASGEISDTELEQTDPCAEPLSEGRKKAKKLKRMKKDLSPTGSISDSSAKLFEVPDTW.

A divalent metal cation-binding residues include Asp-28 and Glu-30. Residues Arg-143–Asn-165 form a disordered region. Over residues Gln-152–Asn-165 the composition is skewed to polar residues. Ser-163 and Ser-167 each carry phosphoserine. Residues Lys-178 to Asp-245 form the R3H domain. Lys-220 bears the N6-acetyllysine mark. Residues Asp-292 and Asp-382 each contribute to the a divalent metal cation site. Lys-499 is modified (N6-acetyllysine). Residue Ser-530 is modified to Phosphoserine. Ser-557 carries the phosphoserine; by MAPKAPK2 modification. Residues Arg-573 to Trp-638 form a disordered region. A phosphoserine mark is found at Ser-583 and Ser-587. Basic residues predominate over residues Lys-606 to Lys-615. A phosphoserine mark is found at Ser-619, Ser-623, and Ser-627.

It belongs to the CAF1 family. In terms of assembly, homodimer. Found in a mRNA decay complex with RENT1, RENT2 and RENT3B. Interacts with KHSRP. Interacts with CELF1/CUGBP1. Interacts with ZC3HAV1 in an RNA-independent manner. Interacts with DHX36. Requires Mg(2+) as cofactor. Post-translationally, phosphorylation by MAPKAPK2, preventing GADD45A mRNA degradation after genotoxic stress.

It is found in the nucleus. The protein localises to the cytoplasm. Its subcellular location is the nucleolus. It catalyses the reaction Exonucleolytic cleavage of poly(A) to 5'-AMP.. Its function is as follows. 3'-exoribonuclease that has a preference for poly(A) tails of mRNAs, thereby efficiently degrading poly(A) tails. Exonucleolytic degradation of the poly(A) tail is often the first step in the decay of eukaryotic mRNAs and is also used to silence certain maternal mRNAs translationally during oocyte maturation and early embryonic development. Involved in nonsense-mediated mRNA decay, a critical process of selective degradation of mRNAs that contain premature stop codons. Also involved in degradation of inherently unstable mRNAs that contain AU-rich elements (AREs) in their 3'-UTR, possibly via its interaction with KHSRP. Probably mediates the removal of poly(A) tails of AREs mRNAs, which constitutes the first step of destabilization. Interacts with both the 3'-end poly(A) tail and the 5'-end cap structure during degradation, the interaction with the cap structure being required for an efficient degradation of poly(A) tails. Also able to recognize poly(A) tails of microRNAs such as MIR21 and H/ACA box snoRNAs (small nucleolar RNAs) leading to microRNAs degradation or snoRNA increased stability. This chain is Poly(A)-specific ribonuclease PARN (PARN), found in Bos taurus (Bovine).